The primary structure comprises 927 residues: MSENEFDIAKSLFQDEADSDIDTRPRKRKAPTSLNLDVMADDNGDGDDGGSDDDAAFIAAHQASMNRKASNLKGRTVKKGGGFQAMGLNANLLKAITRKGFSVPTPIQRKTIPLVLDDQDVVGMARTGSGKTAAFVIPMIEKLKSHSTKVGSRGLILSPSRELALQTLKVVKELGRGTDLKCVLLVGGDSLEEQFGYMAGNPDIIIATPGRFLHLKVEMNLDLSSIKYVVFDEADRLFEMGFAAQLTEILHGLPQSRQTLLFSATLPKSLVEFARAGLQEPTLVRLDTESKISPDLQSVFFTVKSAEKEGALLHILHDVIKVPTGETEAGKHAREQAISGKSSKKRKRSEQNNPNPQESPTEHSTIIFVATKHHVDYIASLLRESGFAVSYAYGSLDQTARKIQVSNFRTGISNILVVTDVAARGIDIPILENVINYDFPSQAKIFVHRVGRTARAGRKGWSYSLVRDADAPYLLDLQLFLGRRLVMGRGQQESANFAEDVVVGGMARESIARSCEWVSKLLDEDIDIQNQREVAMKGEKLYIRTRNSASAESAKRAKDVVASDGWTMLHPLFNNEASQMEVEREKMLARIGGYKPQETIFEISGRRGGKAGDDEAIDMMRKIRSTMENKRAKKQDANQPTTDAEVPASALATTLGDDKDNGLGDDMDQDDVADMSMASDSELEVTFSYQSDKSKSKKKSGDKQSSGTFQNPEYFMSYTPAAHSFAEERGYGVHSGSNSNFVEASRDATMDLSRDEANRGFAEPRSIMRWDKRHKKYVSRRNDEDGSKGALLVKGESGAKIAASFRSGRFDAWKKSKRLGRMPRVGETENPGLGSTVPARGQKFRHNKEQAPKAADKYRGDYEKRRKKEQELQKRQAETGMLQFGSKGGTKKVKSEIRSVDDVRKARKLKEKRREKNARPSKKGKAR.

Residues 1–54 are disordered; the sequence is MSENEFDIAKSLFQDEADSDIDTRPRKRKAPTSLNLDVMADDNGDGDDGGSDDD. Residues 39–54 are compositionally biased toward acidic residues; that stretch reads MADDNGDGDDGGSDDD. The Q motif motif lies at 81–109; it reads GGFQAMGLNANLLKAITRKGFSVPTPIQR. The region spanning 112-284 is the Helicase ATP-binding domain; the sequence is IPLVLDDQDV…RAGLQEPTLV (173 aa). Position 125 to 132 (125 to 132) interacts with ATP; the sequence is ARTGSGKT. Positions 232–235 match the DEAD box motif; the sequence is DEAD. Disordered regions lie at residues 326-363, 627-671, 683-711, and 819-927; these read ETEA…PTEH, MENK…DQDD, LEVT…TFQN, and LGRM…GKAR. A Helicase C-terminal domain is found at 348 to 502; sequence RSEQNNPNPQ…ESANFAEDVV (155 aa). The segment covering 351-363 has biased composition (polar residues); it reads QNNPNPQESPTEH. The span at 627–636 shows a compositional bias: basic and acidic residues; the sequence is MENKRAKKQD. Basic and acidic residues-rich tracts occupy residues 847–877 and 893–904; these read NKEQ…KRQA and VKSEIRSVDDVR.

This sequence belongs to the DEAD box helicase family. DDX54/DBP10 subfamily.

The protein resides in the nucleus. It localises to the nucleolus. The catalysed reaction is ATP + H2O = ADP + phosphate + H(+). Its function is as follows. ATP-binding RNA helicase involved in the biogenesis of 60S ribosomal subunits and is required for the normal formation of 25S and 5.8S rRNAs. This chain is ATP-dependent RNA helicase DBP10 (DBP10), found in Coccidioides immitis (strain RS) (Valley fever fungus).